The sequence spans 304 residues: Non-specific ribonucleoside hydrolase RihC (304 aa).

His233 is a catalytic residue.

It belongs to the IUNH family. RihC subfamily.

Its function is as follows. Hydrolyzes both purine and pyrimidine ribonucleosides with a broad-substrate specificity. In Escherichia coli O6:H1 (strain CFT073 / ATCC 700928 / UPEC), this protein is Non-specific ribonucleoside hydrolase RihC.